The chain runs to 692 residues: Elongation factor G (692 aa).

In terms of domain architecture, tr-type G spans Glu-8–Leu-282. GTP contacts are provided by residues Ala-17 to Thr-24, Asp-81 to His-85, and Asn-135 to Asp-138.

Belongs to the TRAFAC class translation factor GTPase superfamily. Classic translation factor GTPase family. EF-G/EF-2 subfamily.

It is found in the cytoplasm. Functionally, catalyzes the GTP-dependent ribosomal translocation step during translation elongation. During this step, the ribosome changes from the pre-translocational (PRE) to the post-translocational (POST) state as the newly formed A-site-bound peptidyl-tRNA and P-site-bound deacylated tRNA move to the P and E sites, respectively. Catalyzes the coordinated movement of the two tRNA molecules, the mRNA and conformational changes in the ribosome. This chain is Elongation factor G, found in Streptococcus agalactiae serotype III (strain NEM316).